Reading from the N-terminus, the 258-residue chain is 5'-nucleotidase SurE (258 aa).

4 residues coordinate a divalent metal cation: D9, D10, S42, and N96.

Belongs to the SurE nucleotidase family. A divalent metal cation serves as cofactor.

It localises to the cytoplasm. It catalyses the reaction a ribonucleoside 5'-phosphate + H2O = a ribonucleoside + phosphate. Nucleotidase that shows phosphatase activity on nucleoside 5'-monophosphates. In Campylobacter jejuni subsp. jejuni serotype O:6 (strain 81116 / NCTC 11828), this protein is 5'-nucleotidase SurE.